The following is a 217-amino-acid chain: Guanylate kinase (217 aa).

Positions 15–194 (GLMLVLSSPS…AYQRLKRILL (180 aa)) constitute a Guanylate kinase-like domain. 22-29 (SPSGAGKT) is a binding site for ATP.

Belongs to the guanylate kinase family.

Its subcellular location is the cytoplasm. The enzyme catalyses GMP + ATP = GDP + ADP. Functionally, essential for recycling GMP and indirectly, cGMP. This chain is Guanylate kinase, found in Hyphomonas neptunium (strain ATCC 15444).